We begin with the raw amino-acid sequence, 383 residues long: uncharacterized protein (383 aa).

It to V.anguillarum virulence protein VirA.

Its function is as follows. Could have an enzymatic function. This is an uncharacterized protein from Sinorhizobium fredii (strain NBRC 101917 / NGR234).